Consider the following 394-residue polypeptide: Ornithine aminotransferase 1 (394 aa).

N6-(pyridoxal phosphate)lysine is present on Lys-252.

The protein belongs to the class-III pyridoxal-phosphate-dependent aminotransferase family. OAT subfamily. The cofactor is pyridoxal 5'-phosphate.

The protein localises to the cytoplasm. It catalyses the reaction a 2-oxocarboxylate + L-ornithine = L-glutamate 5-semialdehyde + an L-alpha-amino acid. It functions in the pathway amino-acid biosynthesis; L-proline biosynthesis; L-glutamate 5-semialdehyde from L-ornithine: step 1/1. Catalyzes the interconversion of ornithine to glutamate semialdehyde. The protein is Ornithine aminotransferase 1 of Staphylococcus aureus (strain COL).